The primary structure comprises 143 residues: MAIERTFSIIKPDAVAKNHIGAIYNRFETAGLKIVAAKMLHLTKEQAEGFYAEHSERGFFGALVAFMTSGPIMVQVLEGENAVLAHREILGATNPAQAAPGTIRADFAQSIDENAAHGSDSLASAEREIAYFFSAEELCPRTR.

6 residues coordinate ATP: K11, F59, R87, T93, R104, and N114. H117 acts as the Pros-phosphohistidine intermediate in catalysis.

This sequence belongs to the NDK family. In terms of assembly, homotetramer. Mg(2+) serves as cofactor.

It is found in the cytoplasm. It catalyses the reaction a 2'-deoxyribonucleoside 5'-diphosphate + ATP = a 2'-deoxyribonucleoside 5'-triphosphate + ADP. The catalysed reaction is a ribonucleoside 5'-diphosphate + ATP = a ribonucleoside 5'-triphosphate + ADP. In terms of biological role, major role in the synthesis of nucleoside triphosphates other than ATP. The ATP gamma phosphate is transferred to the NDP beta phosphate via a ping-pong mechanism, using a phosphorylated active-site intermediate. The protein is Nucleoside diphosphate kinase of Shewanella oneidensis (strain ATCC 700550 / JCM 31522 / CIP 106686 / LMG 19005 / NCIMB 14063 / MR-1).